A 215-amino-acid polypeptide reads, in one-letter code: Urease accessory protein UreG 2 (215 aa).

11–18 lines the GTP pocket; the sequence is GPVGSGKT.

Belongs to the SIMIBI class G3E GTPase family. UreG subfamily. In terms of assembly, homodimer. UreD, UreF and UreG form a complex that acts as a GTP-hydrolysis-dependent molecular chaperone, activating the urease apoprotein by helping to assemble the nickel containing metallocenter of UreC. The UreE protein probably delivers the nickel.

It is found in the cytoplasm. Its function is as follows. Facilitates the functional incorporation of the urease nickel metallocenter. This process requires GTP hydrolysis, probably effectuated by UreG. The protein is Urease accessory protein UreG 2 of Methylorubrum extorquens (strain PA1) (Methylobacterium extorquens).